Here is a 100-residue protein sequence, read N- to C-terminus: ESAT-6-like protein EsxB (100 aa).

Belongs to the WXG100 family. CFP-10 subfamily. In terms of assembly, forms a tight 1:1 complex with EsxA.

The protein resides in the secreted. Functionally, a secreted protein that might play a role in virulence. Might serve as a chaperone to prevent uncontrolled membrane lysis by its partner EsxA. This Mycobacterium leprae (strain TN) protein is ESAT-6-like protein EsxB (esxB).